Here is a 239-residue protein sequence, read N- to C-terminus: Calcium-activated potassium channel subunit beta-3 (239 aa).

The Cytoplasmic portion of the chain corresponds to 1–51 (MQPFSIPVQITLQGGRRRQGRTALPASGISNGDPLKVHPKLPSSAGEDRAT). A disordered region spans residues 15–38 (GRRRQGRTALPASGISNGDPLKVH). A helical membrane pass occupies residues 52–72 (LLGIAMMASSVLMFFLLGTTV). The Extracellular portion of the chain corresponds to 73 to 197 (LKPFMLSSPR…GVVLRKSGHK (125 aa)). N86, N123, and N174 each carry an N-linked (GlcNAc...) asparagine glycan. The helical transmembrane segment at 198–218 (VVFHCLFWPLLTLLGGALIVG) threads the bilayer. Residues 219 to 239 (LVRLTQHLSFQCEKYRAVVRA) lie on the Cytoplasmic side of the membrane.

This sequence belongs to the KCNMB (TC 8.A.14.1) family. KCNMB3 subfamily. In terms of assembly, interacts with KCNMA1 tetramer. There are probably 4 molecules of KCMNB3 per KCNMA1 tetramer. Post-translationally, N-glycosylated. The extracellular domain contains disulfide bond essential for the gating mechanism.

It is found in the membrane. In terms of biological role, regulatory subunit of the calcium activated potassium KCNMA1 (maxiK) channel. Modulates the calcium sensitivity and gating kinetics of KCNMA1, thereby contributing to KCNMA1 channel diversity. Alters the functional properties of the current expressed by the KCNMA1 channel. May partially inactivate the current of KCNBMA. Two or more subunits of KCNMB3 are required to block the KCNMA1 tetramer. The polypeptide is Calcium-activated potassium channel subunit beta-3 (Rattus norvegicus (Rat)).